The primary structure comprises 868 residues: Translation initiation factor IF-2 (868 aa).

A compositionally biased stretch (basic and acidic residues) spans 199 to 209 (SKKEEVKPEKV). The interval 199–269 (SKKEEVKPEK…GTEKSDKYRE (71 aa)) is disordered. Residues 249-260 (RGGRSKFKKKKG) are compositionally biased toward basic residues. Positions 368-537 (GRAPVVTIMG…LLQSEVLELK (170 aa)) constitute a tr-type G domain. The interval 377–384 (GHVDHGKT) is G1. 377–384 (GHVDHGKT) serves as a coordination point for GTP. The interval 402-406 (GITQH) is G2. The G3 stretch occupies residues 423–426 (DTPG). Residues 423-427 (DTPGH) and 477-480 (NKMD) contribute to the GTP site. The interval 477–480 (NKMD) is G4. The G5 stretch occupies residues 513–515 (SAK).

It belongs to the TRAFAC class translation factor GTPase superfamily. Classic translation factor GTPase family. IF-2 subfamily.

It localises to the cytoplasm. In terms of biological role, one of the essential components for the initiation of protein synthesis. Protects formylmethionyl-tRNA from spontaneous hydrolysis and promotes its binding to the 30S ribosomal subunits. Also involved in the hydrolysis of GTP during the formation of the 70S ribosomal complex. This chain is Translation initiation factor IF-2, found in Legionella pneumophila (strain Paris).